We begin with the raw amino-acid sequence, 240 residues long: MSLNKTIYEGKAKVIIETEDSSTVIQYFKDDVTAFNKEKYEIIEGKGIINNHVSAFIMEKLEEAGISTHFINTLNEREQLVKKLKIIPLEVVVRNIAAGSFCKRFNIKEGEALTSPIIEFFYKNDDLADPMVNENHILYFGWLSHKEMEEVKTTTLKINKILVDLFSNANIYLVDLKLEFGKLINNSTKIILADEISPDNCRLWDKNTHKKLDKDVFRLNLGNLKEAYSEVAKRLSVKLD.

This sequence belongs to the SAICAR synthetase family.

The catalysed reaction is 5-amino-1-(5-phospho-D-ribosyl)imidazole-4-carboxylate + L-aspartate + ATP = (2S)-2-[5-amino-1-(5-phospho-beta-D-ribosyl)imidazole-4-carboxamido]succinate + ADP + phosphate + 2 H(+). It functions in the pathway purine metabolism; IMP biosynthesis via de novo pathway; 5-amino-1-(5-phospho-D-ribosyl)imidazole-4-carboxamide from 5-amino-1-(5-phospho-D-ribosyl)imidazole-4-carboxylate: step 1/2. The protein is Phosphoribosylaminoimidazole-succinocarboxamide synthase of Wolbachia pipientis subsp. Culex pipiens (strain wPip).